A 921-amino-acid polypeptide reads, in one-letter code: Probable dipeptidyl-aminopeptidase B (921 aa).

The segment at 1–87 is disordered; sequence MDAPATASRQ…EADTNDLETG (87 aa). At 1-108 the chain is on the cytoplasmic side; sequence MDAPATASRQ…RVGVDRGLKK (108 aa). The segment covering 22–33 has biased composition (low complexity); it reads SSLSTVSTTSLV. Over residues 35-45 the composition is skewed to basic and acidic residues; sequence DRLHEHNEKSY. A compositionally biased stretch (acidic residues) spans 66 to 75; sequence PDDDDDDDES. Residues 109–129 traverse the membrane as a helical; Signal-anchor for type II membrane protein segment; that stretch reads VILILAAAFLFAWGAALFVFL. The Vacuolar portion of the chain corresponds to 130–921; that stretch reads SNKSYKHAST…KPIVEPKARV (792 aa). N-linked (GlcNAc...) asparagine glycans are attached at residues asparagine 131, asparagine 364, and asparagine 577. Residue serine 768 is the Charge relay system of the active site. N-linked (GlcNAc...) asparagine glycosylation occurs at asparagine 827. Residues aspartate 845 and histidine 878 each act as charge relay system in the active site.

Belongs to the peptidase S9B family.

It localises to the vacuole membrane. It catalyses the reaction Release of an N-terminal dipeptide, Xaa-Yaa-|-Zaa-, from a polypeptide, preferentially when Yaa is Pro, provided Zaa is neither Pro nor hydroxyproline.. In terms of biological role, type IV dipeptidyl-peptidase which removes N-terminal dipeptides sequentially from polypeptides having unsubstituted N-termini provided that the penultimate residue is proline. This Colletotrichum graminicola (strain M1.001 / M2 / FGSC 10212) (Maize anthracnose fungus) protein is Probable dipeptidyl-aminopeptidase B (DAPB).